The following is a 417-amino-acid chain: Serine/threonine-protein phosphatase 4 regulatory subunit 2 (417 aa).

Composition is skewed to polar residues over residues 140–149 (EKNNSSSLNR), 158–170 (NSPS…NING), and 186–196 (APMTTNGLPES). The disordered stretch occupies residues 140-417 (EKNNSSSLNR…EVTDEPMEQD (278 aa)). Ser159 is modified (phosphoserine). Over residues 197–213 (TDSKEANLQQNEEKSHS) the composition is skewed to basic and acidic residues. Over residues 214–226 (DSSTSESEVSSVS) the composition is skewed to low complexity. Phosphoserine is present on Ser226. Residues 231 to 258 (KHPDEDAVEAEGHEVKRLRFDKEGEVRE) show a composition bias toward basic and acidic residues. A compositionally biased stretch (polar residues) spans 259-269 (TASQTTSSEIS). The segment covering 283–297 (QDKDKDSRCTRQHCT) has biased composition (basic and acidic residues). A compositionally biased stretch (acidic residues) spans 298–311 (EEDEEEDEEEEEES). Over residues 318-327 (MIPERKNQEK) the composition is skewed to basic and acidic residues. Residues 338 to 350 (ETSEENNQMEESD) are compositionally biased toward acidic residues. The segment covering 353-363 (QAEKDLLHSEG) has biased composition (basic and acidic residues). Residues 385-399 (GSNSSKTGEILSESS) show a composition bias toward polar residues. Residues 400-417 (MENDDEATEVTDEPMEQD) are compositionally biased toward acidic residues.

The protein belongs to the PPP4R2 family. In terms of assembly, serine/threonine-protein phosphatase 4 (PP4) occurs in different assemblies of the catalytic and one or more regulatory subunits. Component of the PP4 complexes PPP4C-PPP4R2, PPP4C-PPP4R2-PPP4R3A and PPP4C-PPP4R2-PPP4R3B. The PPP4C-PPP4R2 complex appears to be a tetramer composed of 2 molecules of PPP4C and 2 molecules of PPP4R2. Interacts with DDX20/GEMIN3 and GEMIN4. Interacts with RPA2; this DNA damage-dependent interaction recruits PPP4C leading to RPA2 dephosphorylation.

The protein localises to the cytoplasm. It is found in the cytoskeleton. Its subcellular location is the microtubule organizing center. It localises to the centrosome. The protein resides in the nucleus. Functionally, regulatory subunit of serine/threonine-protein phosphatase 4 (PP4). May regulate the activity of PPP4C at centrosomal microtubule organizing centers. Its interaction with the SMN complex leads to enhance the temporal localization of snRNPs, suggesting a role of PPP4C in maturation of spliceosomal snRNPs. The PPP4C-PPP4R2-PPP4R3A PP4 complex specifically dephosphorylates H2AX phosphorylated on 'Ser-140' (gamma-H2AX) generated during DNA replication and required for DNA double strand break repair. Mediates RPA2 dephosphorylation by recruiting PPP4C to RPA2 in a DNA damage-dependent manner. RPA2 dephosphorylation is required for the efficient RPA2-mediated recruitment of RAD51 to chromatin following double strand breaks, an essential step for DNA repair. The chain is Serine/threonine-protein phosphatase 4 regulatory subunit 2 (PPP4R2) from Pongo abelii (Sumatran orangutan).